Reading from the N-terminus, the 283-residue chain is Pantothenate synthetase (283 aa).

30–37 (MGNLHDAH) provides a ligand contact to ATP. Histidine 37 acts as the Proton donor in catalysis. Glutamine 61 lines the (R)-pantoate pocket. Glutamine 61 serves as a coordination point for beta-alanine. An ATP-binding site is contributed by 149 to 152 (GVKD). Glutamine 155 contributes to the (R)-pantoate binding site. ATP-binding positions include valine 178 and 186 to 189 (MSSR).

This sequence belongs to the pantothenate synthetase family. In terms of assembly, homodimer.

It is found in the cytoplasm. The enzyme catalyses (R)-pantoate + beta-alanine + ATP = (R)-pantothenate + AMP + diphosphate + H(+). It functions in the pathway cofactor biosynthesis; (R)-pantothenate biosynthesis; (R)-pantothenate from (R)-pantoate and beta-alanine: step 1/1. Catalyzes the condensation of pantoate with beta-alanine in an ATP-dependent reaction via a pantoyl-adenylate intermediate. This chain is Pantothenate synthetase, found in Cellvibrio japonicus (strain Ueda107) (Pseudomonas fluorescens subsp. cellulosa).